We begin with the raw amino-acid sequence, 97 residues long: Large ribosomal subunit protein uL23 (97 aa).

This sequence belongs to the universal ribosomal protein uL23 family. In terms of assembly, part of the 50S ribosomal subunit. Contacts protein L29, and trigger factor when it is bound to the ribosome.

In terms of biological role, one of the early assembly proteins it binds 23S rRNA. One of the proteins that surrounds the polypeptide exit tunnel on the outside of the ribosome. Forms the main docking site for trigger factor binding to the ribosome. The protein is Large ribosomal subunit protein uL23 of Lactiplantibacillus plantarum (strain ATCC BAA-793 / NCIMB 8826 / WCFS1) (Lactobacillus plantarum).